Reading from the N-terminus, the 265-residue chain is Indole-3-glycerol phosphate synthase (265 aa).

It belongs to the TrpC family.

It catalyses the reaction 1-(2-carboxyphenylamino)-1-deoxy-D-ribulose 5-phosphate + H(+) = (1S,2R)-1-C-(indol-3-yl)glycerol 3-phosphate + CO2 + H2O. Its pathway is amino-acid biosynthesis; L-tryptophan biosynthesis; L-tryptophan from chorismate: step 4/5. The sequence is that of Indole-3-glycerol phosphate synthase from Desulforamulus reducens (strain ATCC BAA-1160 / DSM 100696 / MI-1) (Desulfotomaculum reducens).